A 237-amino-acid polypeptide reads, in one-letter code: Probable aquaporin SIP2-1 (237 aa).

Transmembrane regions (helical) follow at residues 15 to 35 (FMWI…LGFS), 39 to 59 (PSGE…FAYL), 71 to 91 (LTAL…SVFV), 122 to 142 (VAIH…VLLS), 169 to 189 (ILGS…GWAY), and 202 to 222 (VYWL…KVVF). The NPA 1 signature appears at 69 to 71 (NPL). An NPA 2 motif is present at residues 180–182 (NPA).

It belongs to the MIP/aquaporin (TC 1.A.8) family. SIP (TC 1.A.8.10) subfamily. In terms of tissue distribution, expressed in dividing cells and elongating regions of the root tips, emerging lateral roots, root steles, cotyledons, main veins of the rosette leaves, vascular tissues of the flower petals, stigma, stamens (anthers and filaments), pollen and the top and bottom (receptacle) of siliques.

The protein resides in the endoplasmic reticulum membrane. Functionally, water channel required to facilitate the transport of water across cell membrane. Inactive in yeast cells. The sequence is that of Probable aquaporin SIP2-1 (SIP2-1) from Arabidopsis thaliana (Mouse-ear cress).